The following is a 242-amino-acid chain: Placenta-expressed transcript 1 protein (242 aa).

An N-terminal signal peptide occupies residues 1-26 (MAVLRSLLPQLGLFLCLALCFSPALS). Asn-47, Asn-56, and Asn-66 each carry an N-linked (GlcNAc...) asparagine glycan. Residue Ser-223 is the site of GPI-anchor amidated serine attachment. The propeptide at 224–242 (PLAGALHILLVFLISKLLF) is removed in mature form.

In terms of processing, N-glycosylated. GPI-anchored. As to expression, present at high level in the dermal sheath cells near the bulge area of the hair follicle and in the differentiated sebocytes of the normal adult skin (at protein level).

It localises to the apical cell membrane. Modulates leading keratinocyte migration and cellular adhesion to matrix proteins during a wound-healing response and promotes wound repair. May play a role during trichilemmal differentiation of the hair follicle. In Mesocricetus auratus (Golden hamster), this protein is Placenta-expressed transcript 1 protein (PLET1).